A 200-amino-acid chain; its full sequence is Guanylate kinase (200 aa).

A Guanylate kinase-like domain is found at 6 to 184 (GLLIVLSGPS…AVDKLKSILL (179 aa)). Residue 13-20 (GPSGAGKG) participates in ATP binding.

It belongs to the guanylate kinase family.

Its subcellular location is the cytoplasm. The enzyme catalyses GMP + ATP = GDP + ADP. In terms of biological role, essential for recycling GMP and indirectly, cGMP. The sequence is that of Guanylate kinase from Desulfitobacterium hafniense (strain Y51).